A 337-amino-acid chain; its full sequence is DNA-directed RNA polymerase subunit alpha (337 aa).

Residues 1 to 233 (MVREDVVGST…DLLIPFLHAE (233 aa)) form an alpha N-terminal domain (alpha-NTD) region. The alpha C-terminal domain (alpha-CTD) stretch occupies residues 265 to 337 (KGIPLTCIFI…FAINLLNKKL (73 aa)).

Belongs to the RNA polymerase alpha chain family. In terms of assembly, in plastids the minimal PEP RNA polymerase catalytic core is composed of four subunits: alpha, beta, beta', and beta''. When a (nuclear-encoded) sigma factor is associated with the core the holoenzyme is formed, which can initiate transcription.

It localises to the plastid. It is found in the chloroplast. It catalyses the reaction RNA(n) + a ribonucleoside 5'-triphosphate = RNA(n+1) + diphosphate. Functionally, DNA-dependent RNA polymerase catalyzes the transcription of DNA into RNA using the four ribonucleoside triphosphates as substrates. The polypeptide is DNA-directed RNA polymerase subunit alpha (Phalaenopsis aphrodite subsp. formosana (Moth orchid)).